A 248-amino-acid polypeptide reads, in one-letter code: Triosephosphate isomerase (248 aa).

9–11 (NWK) contributes to the substrate binding site. The Electrophile role is filled by H94. Catalysis depends on E166, which acts as the Proton acceptor. Substrate contacts are provided by residues G172, S212, and 233–234 (GG).

Belongs to the triosephosphate isomerase family. Homodimer.

Its subcellular location is the cytoplasm. The enzyme catalyses D-glyceraldehyde 3-phosphate = dihydroxyacetone phosphate. Its pathway is carbohydrate biosynthesis; gluconeogenesis. The protein operates within carbohydrate degradation; glycolysis; D-glyceraldehyde 3-phosphate from glycerone phosphate: step 1/1. Involved in the gluconeogenesis. Catalyzes stereospecifically the conversion of dihydroxyacetone phosphate (DHAP) to D-glyceraldehyde-3-phosphate (G3P). This is Triosephosphate isomerase from Clostridium botulinum (strain ATCC 19397 / Type A).